The primary structure comprises 226 residues: Probable thiol methyltransferase 2 (226 aa).

S-adenosyl-L-methionine is bound by residues Trp-29, Trp-33, Trp-40, and Gly-67. Ser-79 bears the Phosphoserine mark. S-adenosyl-L-methionine-binding positions include Asp-88, 116–117 (DF), and Tyr-132.

Belongs to the class I-like SAM-binding methyltransferase superfamily. TPMT family.

It catalyses the reaction a thiol + S-adenosyl-L-methionine = a methyl thioether + S-adenosyl-L-homocysteine + H(+). In terms of biological role, S-adenosyl-L-methionine-dependent methyltransferase. This chain is Probable thiol methyltransferase 2 (HOL3), found in Arabidopsis thaliana (Mouse-ear cress).